The chain runs to 267 residues: Cell cycle checkpoint protein RAD1 homolog mrt-2 (267 aa).

It belongs to the Rad1 family. As to quaternary structure, probable component of the toroidal 9-1-1 (RAD9-RAD1-HUS1) complex, composed of hpr-9, mrt-2 and hus-1. Interacts with hus-1. Might associate with hpr-9.

Its subcellular location is the nucleus. It carries out the reaction Exonucleolytic cleavage in the 3'- to 5'-direction to yield nucleoside 5'-phosphates.. In terms of biological role, may be a component of the 9-1-1 cell-cycle checkpoint response complex that plays a major role in DNA repair. Promotes DNA double strand break-induced cell cycle arrest and apoptosis, thereby playing a role in genome stability. Also required for telomere length maintenance and germline immortality. May possess 3'-&gt;5' double stranded DNA exonuclease activity. This Caenorhabditis elegans protein is Cell cycle checkpoint protein RAD1 homolog mrt-2.